Here is a 515-residue protein sequence, read N- to C-terminus: 2,3-bisphosphoglycerate-independent phosphoglycerate mutase 1 (515 aa).

Positions 14 and 64 each coordinate Mn(2+). The active-site Phosphoserine intermediate is Ser64. Residues His125, 155 to 156 (RD), Arg187, Arg193, 264 to 267 (RADR), and Lys337 each bind substrate. Residues Asp404, His408, Asp445, His446, and His464 each contribute to the Mn(2+) site.

This sequence belongs to the BPG-independent phosphoglycerate mutase family. Requires Mn(2+) as cofactor.

The catalysed reaction is (2R)-2-phosphoglycerate = (2R)-3-phosphoglycerate. It participates in carbohydrate degradation; glycolysis; pyruvate from D-glyceraldehyde 3-phosphate: step 3/5. Functionally, catalyzes the interconversion of 2-phosphoglycerate and 3-phosphoglycerate. This chain is 2,3-bisphosphoglycerate-independent phosphoglycerate mutase 1, found in Methanosarcina acetivorans (strain ATCC 35395 / DSM 2834 / JCM 12185 / C2A).